We begin with the raw amino-acid sequence, 119 residues long: Glucitol operon activator protein (119 aa).

The H-T-H motif DNA-binding region spans 23–29 (QISRFNR).

Positive regulator for glucitol operon expression. In Escherichia coli (strain K12), this protein is Glucitol operon activator protein (gutM).